The following is a 279-amino-acid chain: tRNA uridine(34) hydroxylase (279 aa).

The Rhodanese domain occupies Thr126 to Ser221. Cys181 (cysteine persulfide intermediate) is an active-site residue.

It belongs to the TrhO family.

It carries out the reaction uridine(34) in tRNA + AH2 + O2 = 5-hydroxyuridine(34) in tRNA + A + H2O. Catalyzes oxygen-dependent 5-hydroxyuridine (ho5U) modification at position 34 in tRNAs. The chain is tRNA uridine(34) hydroxylase from Anaplasma phagocytophilum (strain HZ).